The primary structure comprises 371 residues: 4-hydroxy-3-methylbut-2-en-1-yl diphosphate synthase (flavodoxin) (371 aa).

C269, C272, C304, and E311 together coordinate [4Fe-4S] cluster.

The protein belongs to the IspG family. Requires [4Fe-4S] cluster as cofactor.

The catalysed reaction is (2E)-4-hydroxy-3-methylbut-2-enyl diphosphate + oxidized [flavodoxin] + H2O + 2 H(+) = 2-C-methyl-D-erythritol 2,4-cyclic diphosphate + reduced [flavodoxin]. Its pathway is isoprenoid biosynthesis; isopentenyl diphosphate biosynthesis via DXP pathway; isopentenyl diphosphate from 1-deoxy-D-xylulose 5-phosphate: step 5/6. Functionally, converts 2C-methyl-D-erythritol 2,4-cyclodiphosphate (ME-2,4cPP) into 1-hydroxy-2-methyl-2-(E)-butenyl 4-diphosphate. In Acinetobacter baumannii (strain AB307-0294), this protein is 4-hydroxy-3-methylbut-2-en-1-yl diphosphate synthase (flavodoxin).